A 489-amino-acid chain; its full sequence is N-succinylglutamate 5-semialdehyde dehydrogenase 1 (489 aa).

223–228 contacts NAD(+); the sequence is GSSRTG. Residues Glu246 and Cys280 contribute to the active site.

The protein belongs to the aldehyde dehydrogenase family. AstD subfamily.

The catalysed reaction is N-succinyl-L-glutamate 5-semialdehyde + NAD(+) + H2O = N-succinyl-L-glutamate + NADH + 2 H(+). Its pathway is amino-acid degradation; L-arginine degradation via AST pathway; L-glutamate and succinate from L-arginine: step 4/5. Its function is as follows. Catalyzes the NAD-dependent reduction of succinylglutamate semialdehyde into succinylglutamate. The chain is N-succinylglutamate 5-semialdehyde dehydrogenase 1 from Pseudoalteromonas translucida (strain TAC 125).